A 240-amino-acid chain; its full sequence is Protein unc-119 homolog A (240 aa).

Gly residues predominate over residues 1-12 (MKVKKGGGGTGS). The tract at residues 1–62 (MKVKKGGGGT…PLQGKQPIGP (62 aa)) is disordered. Phosphoserine; by CK2 occurs at positions 37, 39, and 41. Tyr131 is a tetradecanoate binding site.

Belongs to the PDE6D/unc-119 family. May interact with GTP-bound ARL1. Interacts with ARL2 and ARL3 (GTP-bound forms); this promotes the release of myristoylated cargo proteins. Found in a complex with ARL3, RP2 and UNC119; RP2 induces hydrolysis of GTP ARL3 in the complex, leading to the release of UNC119. Interacts with NPHP3 (when myristoylated). Interacts with CYS1 (when myristoylated). Interacts with MACIR; interaction only takes place when UNC119 is not liganded with myristoylated proteins. Interacts with CABP4; in the absence of calcium. Interacts with DNM1; leading to a decrease of DNM1 GTPase activity. Interacts with LCK; this interaction plays a crucial role in activation of LCK. Interacts with FYN. Interacts with RAB11A; in a cell cycle-dependent manner. Interacts with LYN (via SH2 and SH3 domains); leading to LYN activation. Found in a complex with ABL1, ABL2, CRK and UNC119; leading to the inhibition of CRK phosphorylation by ABL kinases. Interacts with CD44. Interacts with KLHL18 (via kelch repeats). Interacts with PPP3CA, PPP3CB and PPP3CC. Interacts with USP48; this interaction promotes UNC119 stability. Phosphorylation suppresses its interaction with KLHL18 and down-regulates its KLHL18-mediated degradation. Phosphorylated more under light conditions than dark conditions. Dephosphorylated by calcineurin. In terms of tissue distribution, localized in photoreceptor synapses in the outer plexiform layer of the retina.

It is found in the cytoplasm. Its subcellular location is the cytoskeleton. It localises to the microtubule organizing center. The protein resides in the centrosome. The protein localises to the spindle. It is found in the spindle pole. Functionally, involved in synaptic functions in photoreceptor cells, the signal transduction in immune cells as a Src family kinase activator, endosome recycling, the uptake of bacteria and endocytosis, protein trafficking in sensory neurons and as lipid-binding chaperone with specificity for a diverse subset of myristoylated proteins. Specifically binds the myristoyl moiety of a subset of N-terminally myristoylated proteins and is required for their localization. Binds myristoylated GNAT1 and is required for G-protein localization and trafficking in sensory neurons. Probably plays a role in trafficking proteins in photoreceptor cells. Plays important roles in mediating Src family kinase signals for the completion of cytokinesis via RAB11A. This Mus musculus (Mouse) protein is Protein unc-119 homolog A (Unc119).